The following is an 83-amino-acid chain: Gas vesicle protein G1 (83 aa).

The protein belongs to the gas vesicle GvpG family. As to quaternary structure, gvpF to GvpM interact with each other in vitro, and may form multi-subunit complex(es). Might interact with GvpA1.

It is found in the gas vesicle. In terms of biological role, proteins GvpF to GvpM might be involved in nucleating gas vesicle formation. A minor component of the gas vesicle. Gas vesicles are hollow, gas filled proteinaceous nanostructures found in several microbial planktonic microorganisms. They allow positioning of halobacteria at the optimal depth for growth in the poorly aerated, shallow brine pools of their habitat. Expression of a 9.5 kb p-vac DNA fragment containing 2 divergently transcribed regions (gvpD-gvpE-gvpF-gvpG-gvpH-gvpI-gvpJ-gvpK-gvpL-gvpM and gvpA-gvpC-gvpN-gvpO) allows H.volcanii to produce gas vesicles. A minimal gas vesicle can be made in H.volcanii by gvpA1-gvpO1 plus gvpF1-gvpG1-gvpJ1-gvpK1-gvpL1-gvpM1; lack of enough GvpJ1 prevents formation. A similar region restores gas vesicle production in H.halobium without the p-vac locus, but it still has the c-vac locus. The chain is Gas vesicle protein G1 (gvpG11) from Halobacterium salinarum (strain ATCC 700922 / JCM 11081 / NRC-1) (Halobacterium halobium).